The following is a 152-amino-acid chain: Xanthine-guanine phosphoribosyltransferase (152 aa).

5-phospho-alpha-D-ribose 1-diphosphate is bound by residues 37 to 38 (RG), Arg-69, and 88 to 96 (DDLVDTGGT). Arg-69 is a GMP binding site. Residue Asp-89 coordinates Mg(2+). Asp-92 and Ile-135 together coordinate guanine. Asp-92 and Ile-135 together coordinate xanthine. Residues 92–96 (DTGGT) and 134–135 (WI) contribute to the GMP site.

This sequence belongs to the purine/pyrimidine phosphoribosyltransferase family. XGPT subfamily. As to quaternary structure, homotetramer. The cofactor is Mg(2+).

The protein localises to the cell inner membrane. The enzyme catalyses GMP + diphosphate = guanine + 5-phospho-alpha-D-ribose 1-diphosphate. It carries out the reaction XMP + diphosphate = xanthine + 5-phospho-alpha-D-ribose 1-diphosphate. It catalyses the reaction IMP + diphosphate = hypoxanthine + 5-phospho-alpha-D-ribose 1-diphosphate. It functions in the pathway purine metabolism; GMP biosynthesis via salvage pathway; GMP from guanine: step 1/1. It participates in purine metabolism; XMP biosynthesis via salvage pathway; XMP from xanthine: step 1/1. Purine salvage pathway enzyme that catalyzes the transfer of the ribosyl-5-phosphate group from 5-phospho-alpha-D-ribose 1-diphosphate (PRPP) to the N9 position of the 6-oxopurines guanine and xanthine to form the corresponding ribonucleotides GMP (guanosine 5'-monophosphate) and XMP (xanthosine 5'-monophosphate), with the release of PPi. To a lesser extent, also acts on hypoxanthine. This chain is Xanthine-guanine phosphoribosyltransferase, found in Yersinia pseudotuberculosis serotype O:1b (strain IP 31758).